Consider the following 211-residue polypeptide: Thiamine-phosphate synthase (211 aa).

Residues 37–41 and Asn-69 each bind 4-amino-2-methyl-5-(diphosphooxymethyl)pyrimidine; that span reads QLRIK. 2 residues coordinate Mg(2+): Asp-70 and Asp-89. Ser-108 contacts 4-amino-2-methyl-5-(diphosphooxymethyl)pyrimidine. 134–136 contributes to the 2-[(2R,5Z)-2-carboxy-4-methylthiazol-5(2H)-ylidene]ethyl phosphate binding site; that stretch reads TQT. Residue Lys-137 participates in 4-amino-2-methyl-5-(diphosphooxymethyl)pyrimidine binding. Residues Gly-166 and 186–187 each bind 2-[(2R,5Z)-2-carboxy-4-methylthiazol-5(2H)-ylidene]ethyl phosphate; that span reads VS.

Belongs to the thiamine-phosphate synthase family. The cofactor is Mg(2+).

The catalysed reaction is 2-[(2R,5Z)-2-carboxy-4-methylthiazol-5(2H)-ylidene]ethyl phosphate + 4-amino-2-methyl-5-(diphosphooxymethyl)pyrimidine + 2 H(+) = thiamine phosphate + CO2 + diphosphate. It catalyses the reaction 2-(2-carboxy-4-methylthiazol-5-yl)ethyl phosphate + 4-amino-2-methyl-5-(diphosphooxymethyl)pyrimidine + 2 H(+) = thiamine phosphate + CO2 + diphosphate. The enzyme catalyses 4-methyl-5-(2-phosphooxyethyl)-thiazole + 4-amino-2-methyl-5-(diphosphooxymethyl)pyrimidine + H(+) = thiamine phosphate + diphosphate. Its pathway is cofactor biosynthesis; thiamine diphosphate biosynthesis; thiamine phosphate from 4-amino-2-methyl-5-diphosphomethylpyrimidine and 4-methyl-5-(2-phosphoethyl)-thiazole: step 1/1. Condenses 4-methyl-5-(beta-hydroxyethyl)thiazole monophosphate (THZ-P) and 2-methyl-4-amino-5-hydroxymethyl pyrimidine pyrophosphate (HMP-PP) to form thiamine monophosphate (TMP). The chain is Thiamine-phosphate synthase from Escherichia coli (strain SE11).